A 547-amino-acid polypeptide reads, in one-letter code: Chaperonin GroEL (547 aa).

ATP is bound by residues 30 to 33, K51, 87 to 91, G415, and D495; these read TLGP and DGTTT. The disordered stretch occupies residues 525-547; it reads PDEKEAGGGAPDMGGMGGMGGMM. Over residues 531-547 the composition is skewed to gly residues; it reads GGGAPDMGGMGGMGGMM.

The protein belongs to the chaperonin (HSP60) family. Forms a cylinder of 14 subunits composed of two heptameric rings stacked back-to-back. Interacts with the co-chaperonin GroES.

Its subcellular location is the cytoplasm. The catalysed reaction is ATP + H2O + a folded polypeptide = ADP + phosphate + an unfolded polypeptide.. In terms of biological role, together with its co-chaperonin GroES, plays an essential role in assisting protein folding. The GroEL-GroES system forms a nano-cage that allows encapsulation of the non-native substrate proteins and provides a physical environment optimized to promote and accelerate protein folding. This chain is Chaperonin GroEL, found in Chromohalobacter salexigens (strain ATCC BAA-138 / DSM 3043 / CIP 106854 / NCIMB 13768 / 1H11).